A 92-amino-acid polypeptide reads, in one-letter code: C-C motif chemokine 3 (92 aa).

An N-terminal signal peptide occupies residues Met-1–Ser-23. 2 disulfides stabilise this stretch: Cys-34–Cys-57 and Cys-35–Cys-73.

Belongs to the intercrine beta (chemokine CC) family. Self-associates. Also heterodimer of MIP-1-alpha(4-69) and MIP-1-beta(3-69). Interacts with CCR1. Expressed in lung, spleen, and pancreas.

The protein resides in the secreted. In terms of biological role, monokine with inflammatory and chemokinetic properties. Binds to CCR1, CCR4 and CCR5. One of the major HIV-suppressive factors produced by CD8+ T-cells. Recombinant MIP-1-alpha induces a dose-dependent inhibition of different strains of HIV-1, HIV-2, and simian immunodeficiency virus (SIV). This chain is C-C motif chemokine 3 (Ccl3), found in Mus musculus (Mouse).